A 359-amino-acid polypeptide reads, in one-letter code: MFYCRSGFEKECAGEIQDKATQLEVFGFPRLKNNTGYVLFECYQEGDADRLIREIKFNELIFARQMFAVAVEVSDLPKDDRISPILDALSEVEDVPCCGDIRIETPDTNEAKELLKFCRKFTVPMRQALRGKKMLTERDSNRIPVLHICFIAPGHCYVGYSYTNNNSQFFMGIPRLKFPADAPSRSTLKLEEAFHVFIPKEEWDDRLASGMWGVDLGACPGGWTYQLVKRSMFVHAIDNGMMAQSLMDTGQVKHHMVDGFKFEPPRKNVTWLICDMVEKPARVAHLMGEWLIKGWAKEALFNLKLPMKGRYDEVLQDIENLKDFLKKNGFQYKLQAKHLYHDREEITVHIQAISNISPH.

Residues Ser-186, 219-222 (CPGG), Asp-238, Asp-258, and Asp-275 contribute to the S-adenosyl-L-methionine site. The active-site Proton acceptor is Lys-304.

It belongs to the class I-like SAM-binding methyltransferase superfamily. RNA methyltransferase RlmE family. RlmM subfamily. Monomer.

It is found in the cytoplasm. The catalysed reaction is cytidine(2498) in 23S rRNA + S-adenosyl-L-methionine = 2'-O-methylcytidine(2498) in 23S rRNA + S-adenosyl-L-homocysteine + H(+). In terms of biological role, catalyzes the 2'-O-methylation at nucleotide C2498 in 23S rRNA. This is Ribosomal RNA large subunit methyltransferase M from Aliivibrio fischeri (strain MJ11) (Vibrio fischeri).